The sequence spans 91 residues: Acylphosphatase (91 aa).

One can recognise an Acylphosphatase-like domain in the interval 5–91 (RAHVFVSGRV…EGVDGFEVRW (87 aa)). Active-site residues include R20 and N38.

It belongs to the acylphosphatase family.

The enzyme catalyses an acyl phosphate + H2O = a carboxylate + phosphate + H(+). In Haloarcula marismortui (strain ATCC 43049 / DSM 3752 / JCM 8966 / VKM B-1809) (Halobacterium marismortui), this protein is Acylphosphatase (acyP).